The sequence spans 501 residues: Phenylalanine--tRNA ligase alpha subunit (501 aa).

Residues Thr-340 and Phe-423 each contribute to the L-phenylalanine site. Mg(2+) is bound at residue Glu-425. Phe-448 serves as a coordination point for L-phenylalanine.

It belongs to the class-II aminoacyl-tRNA synthetase family. Phe-tRNA synthetase alpha subunit type 2 subfamily. Tetramer of two alpha and two beta subunits. Mg(2+) is required as a cofactor.

Its subcellular location is the cytoplasm. The catalysed reaction is tRNA(Phe) + L-phenylalanine + ATP = L-phenylalanyl-tRNA(Phe) + AMP + diphosphate + H(+). This chain is Phenylalanine--tRNA ligase alpha subunit, found in Methanococcus maripaludis (strain C7 / ATCC BAA-1331).